The chain runs to 177 residues: MWKANVWVLGEAAHGISGGTIIYQLLMFIILLALLRKFAWQPLMNIMKQREEHIANEIDQAEKRRQEAEKLLEEQRELMKQSRQEAQALIENARKLAEEQKEQIVASARAEAERVKEVAKKEIEREKEQAMAALREQVASLSVLIASKVIEKELTEQDQRKLIEAYIKDVQEAGGAR.

A helical membrane pass occupies residues 15–35 (GISGGTIIYQLLMFIILLALL).

The protein belongs to the ATPase B chain family. As to quaternary structure, F-type ATPases have 2 components, F(1) - the catalytic core - and F(0) - the membrane proton channel. F(1) has five subunits: alpha(3), beta(3), gamma(1), delta(1), epsilon(1). F(0) has three main subunits: a(1), b(2) and c(10-14). The alpha and beta chains form an alternating ring which encloses part of the gamma chain. F(1) is attached to F(0) by a central stalk formed by the gamma and epsilon chains, while a peripheral stalk is formed by the delta and b chains.

The protein resides in the cell membrane. Functionally, f(1)F(0) ATP synthase produces ATP from ADP in the presence of a proton or sodium gradient. F-type ATPases consist of two structural domains, F(1) containing the extramembraneous catalytic core and F(0) containing the membrane proton channel, linked together by a central stalk and a peripheral stalk. During catalysis, ATP synthesis in the catalytic domain of F(1) is coupled via a rotary mechanism of the central stalk subunits to proton translocation. In terms of biological role, component of the F(0) channel, it forms part of the peripheral stalk, linking F(1) to F(0). This Geobacillus kaustophilus (strain HTA426) protein is ATP synthase subunit b.